Reading from the N-terminus, the 197-residue chain is MQKVVLATGNPGKVRELASLLADFGLDIVAQTELGVDSAEETGLTFIENAILKARHAAQITGLPAIADDSGLAVDALGGAPGIYSARYAGAEASDQQNLDKLLLTVKDVPDEQRRASFHCVLVYLRHAEDPTPIVCHGSWQGVLTHQSSGSGGFGYDPIFFVPELGKTAAELTREEKNAQSHRGQALRLLLDALRNA.

Residue Thr-8 to Lys-13 participates in substrate binding. 2 residues coordinate Mg(2+): Glu-40 and Asp-69. The Proton acceptor role is filled by Asp-69. Substrate-binding positions include Ser-70, Phe-154 to Asp-157, Lys-177, and His-182 to Arg-183.

The protein belongs to the HAM1 NTPase family. As to quaternary structure, homodimer. Requires Mg(2+) as cofactor.

It catalyses the reaction XTP + H2O = XMP + diphosphate + H(+). It carries out the reaction dITP + H2O = dIMP + diphosphate + H(+). The catalysed reaction is ITP + H2O = IMP + diphosphate + H(+). Functionally, pyrophosphatase that catalyzes the hydrolysis of nucleoside triphosphates to their monophosphate derivatives, with a high preference for the non-canonical purine nucleotides XTP (xanthosine triphosphate), dITP (deoxyinosine triphosphate) and ITP. Seems to function as a house-cleaning enzyme that removes non-canonical purine nucleotides from the nucleotide pool, thus preventing their incorporation into DNA/RNA and avoiding chromosomal lesions. This chain is dITP/XTP pyrophosphatase, found in Pectobacterium atrosepticum (strain SCRI 1043 / ATCC BAA-672) (Erwinia carotovora subsp. atroseptica).